The sequence spans 1510 residues: Chromosome partition protein MukB (1510 aa).

Positions 6 to 30 (ELENEIELESDEVIMENENVEEIVD) form a coiled coil. 75-82 (GGNGAGKS) contributes to the ATP binding site. Coiled-coil stretches lie at residues 346-506 (QHRL…HKMS), 553-633 (QQTP…NLTA), 673-706 (MQSQ…RLSQ), 821-847 (RAAR…QIAF), 876-1064 (EELM…IQLQ), 1094-1149 (ERAR…RELV), and 1249-1305 (DAIE…QNIS). The tract at residues 707 to 824 (PDGSEDPRLN…EIPLFGRAAR (118 aa)) is flexible hinge.

This sequence belongs to the SMC family. MukB subfamily. In terms of assembly, homodimerization via its hinge domain. Binds to DNA via its C-terminal region. Interacts, and probably forms a ternary complex, with MukE and MukF via its C-terminal region. The complex formation is stimulated by calcium or magnesium. Interacts with tubulin-related protein FtsZ.

The protein localises to the cytoplasm. The protein resides in the nucleoid. Its function is as follows. Plays a central role in chromosome condensation, segregation and cell cycle progression. Functions as a homodimer, which is essential for chromosome partition. Involved in negative DNA supercoiling in vivo, and by this means organize and compact chromosomes. May achieve or facilitate chromosome segregation by condensation DNA from both sides of a centrally located replisome during cell division. This chain is Chromosome partition protein MukB, found in Haemophilus influenzae (strain 86-028NP).